The following is a 476-amino-acid chain: Protein transport protein Sec61 subunit alpha (476 aa).

The Cytoplasmic portion of the chain corresponds to Gly-2–Leu-33. A helical transmembrane segment spans residues Trp-34–Ile-53. At Met-54 to Leu-76 the chain is on the lumenal side. A helical transmembrane segment spans residues Met-77–Gly-96. The Cytoplasmic portion of the chain corresponds to Ala-97–Lys-117. Residues Leu-118–Gly-138 form a helical membrane-spanning segment. The Lumenal portion of the chain corresponds to Asp-139–Gly-144. The helical transmembrane segment at Ala-145–Leu-165 threads the bilayer. Topologically, residues Asp-166 to Gly-172 are cytoplasmic. A helical membrane pass occupies residues Tyr-173–Trp-193. The Lumenal portion of the chain corresponds to Lys-194–Pro-240. Residues Asn-241 to Phe-261 traverse the membrane as a helical segment. Over Arg-262–Asn-288 the chain is Cytoplasmic. Residues Ile-289–Ser-309 form a helical membrane-spanning segment. The Lumenal portion of the chain corresponds to Thr-310 to Val-354. A helical transmembrane segment spans residues Leu-355–Phe-375. Residues Ser-376 to Ala-420 are Cytoplasmic-facing. The helical transmembrane segment at Ala-421 to Ile-441 threads the bilayer. Over Gly-442–Thr-445 the chain is Lumenal. Residues Gly-446 to Val-462 traverse the membrane as a helical segment. The Cytoplasmic segment spans residues Lys-463 to Phe-476.

The protein belongs to the SecY/SEC61-alpha family. In terms of assembly, the SEC61 channel-forming translocon complex consists of channel-forming core components SEC61A1, SEC61B and SEC61G and different auxiliary components such as SEC62 and SEC63. The SEC61 channel associates with the multi-pass translocon (MPT) complex.

The protein resides in the endoplasmic reticulum membrane. In terms of biological role, component of SEC61 channel-forming translocon complex that mediates transport of signal peptide-containing precursor polypeptides across the endoplasmic reticulum (ER). Forms a ribosome receptor and a gated pore in the ER membrane, both functions required for cotranslational translocation of nascent polypeptides. May cooperate with auxiliary protein SEC62, SEC63 and HSPA5/BiP to enable post-translational transport of small presecretory proteins. The SEC61 channel is also involved in ER membrane insertion of transmembrane proteins: it mediates membrane insertion of the first few transmembrane segments of proteins, while insertion of subsequent transmembrane regions of multi-pass membrane proteins is mediated by the multi-pass translocon (MPT) complex. This is Protein transport protein Sec61 subunit alpha (sec61a) from Boreogadus saida (Polar cod).